A 1163-amino-acid chain; its full sequence is Voltage-gated inwardly rectifying potassium channel KCNH2 (1163 aa).

Residues 1–405 (MPVRRGHVAP…RIHRWTILHY (405 aa)) lie on the Cytoplasmic side of the membrane. The region spanning 17–88 (TIIRKFEGQS…AAQIAQALLG (72 aa)) is the PAS domain. The region spanning 92–144 (RKVEIAFYRKDGSCFLCLVDVVPVKNEDGAVIMFILNFEVVMEKDMVGSPAHD) is the PAC domain. Residues 235-286 (VGPASASPVASIPGPHPSPRAQSLNPDASGSSCSLARTRSRESCASVRRASS) form a disordered region. Phosphoserine is present on residues Ser-239 and Ser-245. Over residues 254–271 (RAQSLNPDASGSSCSLAR) the composition is skewed to polar residues. Phosphoserine occurs at positions 285, 286, 322, and 353. Residues 406–426 (SPFKAVWDWLILLLVIYTAVF) traverse the membrane as a helical segment. Residues 427-452 (TPYSAAFLLKETEDGSQAPDCGYACQ) lie on the Extracellular side of the membrane. A helical membrane pass occupies residues 453 to 473 (PLAVVDLLVDIMFIVDILINF). The Cytoplasmic portion of the chain corresponds to 474–497 (RTTYVNANEEVVSHPGRIAVHYFK). A helical membrane pass occupies residues 498 to 518 (GWFLIDMVAAIPFDLLIFGSG). Residues 519 to 522 (SEEL) lie on the Extracellular side of the membrane. Residues 523-543 (IGLLKTARLLRLVRVARKLDR) form a helical; Voltage-sensor membrane-spanning segment. The Cytoplasmic portion of the chain corresponds to 544–549 (YSEYGA). A helical membrane pass occupies residues 550 to 570 (AVLFLLMCTFALIAHWLACIW). The Extracellular segment spans residues 571–613 (YAIGNMEQPHMDSHIGWLHNLGDQIGKPYNSSGLGGPSIKDKY). N-linked (GlcNAc...) asparagine glycosylation occurs at Asn-600. The pore-forming intramembrane region spans 614 to 634 (VTALYFTFSSLTSVGFGNVSP). The short motif at 626–631 (SVGFGN) is the Selectivity filter element. At 635–640 (NTNSEK) the chain is on the extracellular side. Residues 641–661 (IFSICVMLIGSLMYASIFGNV) form a helical membrane-spanning segment. The Cytoplasmic segment spans residues 662–1163 (SAIIQRLYSG…LHRHGSDPGS (502 aa)). Residues 744–844 (PFRGATKGCL…IHRDDLLEVL (101 aa)) form a cNMP-binding domain region. Phosphoserine is present on residues Ser-873 and Ser-876. 3 disordered regions span residues 873–992 (SPSS…NPLS), 1015–1043 (ELPR…GDVE), and 1126–1163 (AGAP…DPGS). Positions 885–894 (RQRKRKLSFR) are enriched in basic residues. Low complexity predominate over residues 932-943 (GESPSSGPSSPE). Omega-N-methylarginine is present on Arg-1018. Residues 1039–1066 (RGDVESRLDALQRQLNRLETRLSADMAT) adopt a coiled-coil conformation. Position 1141 is a phosphoserine (Ser-1141).

It belongs to the potassium channel family. H (Eag) (TC 1.A.1.20) subfamily. Kv11.1/KCNH2 sub-subfamily. As to quaternary structure, the potassium channel is probably composed of a homo- or heterotetrameric complex of pore-forming alpha subunits that can associate with modulating beta subunits. Interacts with DNAJB12 and DNAJB14; chaperones DNAJB12 and DNAJB14 promote tetramerization. Heteromultimer with KCNH6/ERG2 and KCNH7/ERG3. Interacts with ALG10B. Forms a stable complex with KCNE1 or KCNE2, and that this heteromultimerization regulates Inward rectifier potassium channel activity. Interacts with CANX. The core-glycosylated, but not the fully glycosylated form interacts with RNF207. Interacts with NDFIP1 and NDFIP2; this interaction decreases the cell membrane expression by targeting KCNH2, through interaction with NEDD4L, for the degradation through the multivesicular bodies (MVBs)-lysosomal pathway. In terms of processing, phosphorylated on serine and threonine residues. Phosphorylation by PKA inhibits ion conduction. Highly expressed in brain and testis, slightly less so in heart, adrenal, retina and thymus. Detected at lower levels in lung, soleus, tibialis, and at very low levels in cornea and lens. A shorter transcript is detected in skeletal muscle. Found in pituitary.

It localises to the cell membrane. The catalysed reaction is K(+)(in) = K(+)(out). Its function is as follows. Pore-forming (alpha) subunit of voltage-gated inwardly rectifying potassium channel. Characterized by unusual gating kinetics by producing relatively small outward currents during membrane depolarization and large inward currents during subsequent repolarization which reflect a rapid inactivation during depolarization and quick recovery from inactivation but slow deactivation (closing) during repolarization. Channel properties are modulated by cAMP and subunit assembly. Forms a stable complex with KCNE1 or KCNE2, and that this heteromultimerization regulates inward rectifier potassium channel activity. This Rattus norvegicus (Rat) protein is Voltage-gated inwardly rectifying potassium channel KCNH2.